The chain runs to 530 residues: Na(+)/H(+) antiporter NhaB (530 aa).

A run of 10 helical transmembrane segments spans residues 13–33, 67–87, 90–110, 138–158, 205–225, 245–265, 302–333, 350–370, 449–469, and 477–497; these read FLGQ…LINP, PGGL…ETVL, VVGN…IYFL, AAAL…VIAV, LLMH…VGEP, MAPI…FLEF, LVIQ…VIIL, FEEA…VAVI, VATP…LAPL, and MVIM…VMTA.

It belongs to the NhaB Na(+)/H(+) (TC 2.A.34) antiporter family.

It localises to the cell inner membrane. The catalysed reaction is 2 Na(+)(in) + 3 H(+)(out) = 2 Na(+)(out) + 3 H(+)(in). In terms of biological role, na(+)/H(+) antiporter that extrudes sodium in exchange for external protons. This is Na(+)/H(+) antiporter NhaB from Alcanivorax borkumensis (strain ATCC 700651 / DSM 11573 / NCIMB 13689 / SK2).